The chain runs to 428 residues: Tryptophan synthase beta chain (428 aa).

Lysine 100 is subject to N6-(pyridoxal phosphate)lysine.

It belongs to the TrpB family. In terms of assembly, tetramer of two alpha and two beta chains. The cofactor is pyridoxal 5'-phosphate.

It catalyses the reaction (1S,2R)-1-C-(indol-3-yl)glycerol 3-phosphate + L-serine = D-glyceraldehyde 3-phosphate + L-tryptophan + H2O. It functions in the pathway amino-acid biosynthesis; L-tryptophan biosynthesis; L-tryptophan from chorismate: step 5/5. Functionally, the beta subunit is responsible for the synthesis of L-tryptophan from indole and L-serine. In Streptomyces avermitilis (strain ATCC 31267 / DSM 46492 / JCM 5070 / NBRC 14893 / NCIMB 12804 / NRRL 8165 / MA-4680), this protein is Tryptophan synthase beta chain.